A 379-amino-acid chain; its full sequence is MNNEKSNAKLRFIISGGGTGGHIFPAISIADALRRRYPECEILFVGAEGRMEMERVPRSGYEIVGLPIKGLDRKHLLSNYKVAIAVIRSMRLANKTIRNFRPDMVIGVGGYASGPTLRRAHSLGIPTLIQEQNSYAGVTNKLLSRGAHKICVAYPEMDKFFSPEKIVFTGNPVRPEIEFGHPSRSESLRFFGFEQSESPVVLVVGGSLGALTINKSITDKLGKWAESGVHLIWQTGKNYIETARKAVENHPGLKCYVNDFITRMDYAYCAADLVVSRAGACSISELCLLGKPTILVPSPNVAEDHQTKNALALSTRAAAVLIPDTEAIELLTDTALSLVRNLAELSSLSEQIRTLAKPQAADRIVDEIARIVEHEKRAN.

UDP-N-acetyl-alpha-D-glucosamine-binding positions include 19–21 (TGG), asparagine 133, arginine 174, serine 207, isoleucine 261, and glutamine 306.

Belongs to the glycosyltransferase 28 family. MurG subfamily.

It is found in the cell inner membrane. It catalyses the reaction di-trans,octa-cis-undecaprenyl diphospho-N-acetyl-alpha-D-muramoyl-L-alanyl-D-glutamyl-meso-2,6-diaminopimeloyl-D-alanyl-D-alanine + UDP-N-acetyl-alpha-D-glucosamine = di-trans,octa-cis-undecaprenyl diphospho-[N-acetyl-alpha-D-glucosaminyl-(1-&gt;4)]-N-acetyl-alpha-D-muramoyl-L-alanyl-D-glutamyl-meso-2,6-diaminopimeloyl-D-alanyl-D-alanine + UDP + H(+). It participates in cell wall biogenesis; peptidoglycan biosynthesis. In terms of biological role, cell wall formation. Catalyzes the transfer of a GlcNAc subunit on undecaprenyl-pyrophosphoryl-MurNAc-pentapeptide (lipid intermediate I) to form undecaprenyl-pyrophosphoryl-MurNAc-(pentapeptide)GlcNAc (lipid intermediate II). The polypeptide is UDP-N-acetylglucosamine--N-acetylmuramyl-(pentapeptide) pyrophosphoryl-undecaprenol N-acetylglucosamine transferase (Porphyromonas gingivalis (strain ATCC 33277 / DSM 20709 / CIP 103683 / JCM 12257 / NCTC 11834 / 2561)).